The chain runs to 166 residues: Gem-associated protein 6 (166 aa).

The region spanning 4-73 (WMKKSPLEWE…VQTVETISEG (70 aa)) is the Sm domain. Positions 68-166 (ETISEGDHRV…LIQGHLSASQ (99 aa)) constitute an AD domain. Ser-94 and Ser-165 each carry phosphoserine.

As to quaternary structure, part of the core SMN complex that contains SMN1, GEMIN2/SIP1, DDX20/GEMIN3, GEMIN4, GEMIN5, GEMIN6, GEMIN7, GEMIN8 and STRAP/UNRIP. Part of the SMN-Sm complex that contains SMN1, GEMIN2/SIP1, DDX20/GEMIN3, GEMIN4, GEMIN5, GEMIN6, GEMIN7, GEMIN8, STRAP/UNRIP and the Sm proteins SNRPB, SNRPD1, SNRPD2, SNRPD3, SNRPE, SNRPF and SNRPG. Interacts with GEMIN7; the interaction is direct. Interacts with GEMIN8; the interaction is direct. Interacts with SNRPB, SNRPD2, SNRPD3 and SNRPE; the interaction is direct.

It is found in the nucleus. The protein localises to the nucleoplasm. It localises to the gem. The protein resides in the cytoplasm. Its function is as follows. The SMN complex catalyzes the assembly of small nuclear ribonucleoproteins (snRNPs), the building blocks of the spliceosome, and thereby plays an important role in the splicing of cellular pre-mRNAs. Most spliceosomal snRNPs contain a common set of Sm proteins SNRPB, SNRPD1, SNRPD2, SNRPD3, SNRPE, SNRPF and SNRPG that assemble in a heptameric protein ring on the Sm site of the small nuclear RNA to form the core snRNP (Sm core). In the cytosol, the Sm proteins SNRPD1, SNRPD2, SNRPE, SNRPF and SNRPG are trapped in an inactive 6S pICln-Sm complex by the chaperone CLNS1A that controls the assembly of the core snRNP. To assemble core snRNPs, the SMN complex accepts the trapped 5Sm proteins from CLNS1A forming an intermediate. Binding of snRNA inside 5Sm triggers eviction of the SMN complex, thereby allowing binding of SNRPD3 and SNRPB to complete assembly of the core snRNP. The sequence is that of Gem-associated protein 6 (Gemin6) from Mus musculus (Mouse).